Reading from the N-terminus, the 379-residue chain is Presenilin-associated rhomboid-like protein, mitochondrial (379 aa).

The transit peptide at 1 to 52 (MAWRGWAQRGWGCGQAWGASVGGRSCEELTAVLTPPQLLGRRFNFFIQQKCG) directs the protein to the mitochondrion. The Mitochondrial matrix portion of the chain corresponds to 53–101 (FRKAPRKVEPRRSDPGTSGEAYKRSALIPPVEETVFYPSPYPIRSLIKP). Residue S65 is modified to Phosphoserine. The residue at position 69 (T69) is a Phosphothreonine. S70 bears the Phosphoserine mark. Residues 102–121 (LFFTVGFTGCAFGSAAIWQY) traverse the membrane as a helical segment. The Mitochondrial intermembrane portion of the chain corresponds to 122–167 (ESLKSRVQSYFDGIKADWLDSIRPQKEGDFRKEINKWWNNLSDGQR). Residues 168-187 (TVTGIIAANVLVFCLWRVPS) traverse the membrane as a helical segment. Topologically, residues 188–207 (LQRTMIRYFTSNPASKVLCS) are mitochondrial matrix. The chain crosses the membrane as a helical span at residues 208–230 (PMLLSTFSHFSLFHMAANMYVLW). Over 231-244 (SFSSSIVNILGQEQ) the chain is Mitochondrial intermembrane. A helical membrane pass occupies residues 245–262 (FMAVYLSAGVISNFVSYV). The Mitochondrial matrix segment spans residues 263-272 (GKVATGRYGP). Residues 273-289 (SLGASGAIMTVLAAVCT) form a helical membrane-spanning segment. The active-site Nucleophile is the S277. Over 290–295 (KIPEGR) the chain is Mitochondrial intermembrane. A helical transmembrane segment spans residues 296-318 (LAIIFLPMFTFTAGNALKAIIAM). Over 319 to 332 (DTAGMILGWKFFDH) the chain is Mitochondrial matrix. A helical transmembrane segment spans residues 333-354 (AAHLGGALFGIWYVTYGHELIW). H335 is an active-site residue. Residues 355 to 379 (KNREPLVKIWHEIRTNGPKKGGGSK) are Mitochondrial intermembrane-facing.

This sequence belongs to the peptidase S54 family. Interacts with PSEN1 and PSEN2. Binds OPA1. P-beta is proteolytically processed (beta-cleavage) in a PARL-dependent manner. The cleavage is inhibited when residues Ser-65, Thr-69 and Ser-70 are all phosphorylated.

Its subcellular location is the mitochondrion inner membrane. The protein resides in the nucleus. The enzyme catalyses Cleaves type-1 transmembrane domains using a catalytic dyad composed of serine and histidine that are contributed by different transmembrane domains.. In terms of biological role, required for the control of apoptosis during postnatal growth. Essential for proteolytic processing of an antiapoptotic form of OPA1 which prevents the release of mitochondrial cytochrome c in response to intrinsic apoptotic signals. Required for the maturation of PINK1 into its 52kDa mature form after its cleavage by mitochondrial-processing peptidase (MPP). Promotes cleavage of serine/threonine-protein phosphatase PGAM5 in damaged mitochondria in response to loss of mitochondrial membrane potential. Mediates differential cleavage of PINK1 and PGAM5 depending on the health status of mitochondria, disassociating from PINK1 and associating with PGAM5 in response to mitochondrial membrane potential loss. Required for processing of CLPB into a form with higher protein disaggregase activity by removing an autoinhibitory N-terminal peptide. Promotes processing of DIABLO/SMAC in the mitochondrion which is required for DIABLO apoptotic activity. Also required for cleavage of STARD7 and TTC19. Promotes changes in mitochondria morphology regulated by phosphorylation of P-beta domain. The sequence is that of Presenilin-associated rhomboid-like protein, mitochondrial (PARL) from Homo sapiens (Human).